Here is a 110-residue protein sequence, read N- to C-terminus: Iron-sulfur cluster assembly protein CyaY (110 aa).

This sequence belongs to the frataxin family.

Its function is as follows. Involved in iron-sulfur (Fe-S) cluster assembly. May act as a regulator of Fe-S biogenesis. This chain is Iron-sulfur cluster assembly protein CyaY, found in Pseudomonas fluorescens (strain SBW25).